The following is a 148-amino-acid chain: Male-specific protein scotti (148 aa).

The interval 56–78 is disordered; it reads PQEPPLGVFPAQGGPNGPPRLRK. Residue asparagine 129 is glycosylated (N-linked (GlcNAc...) asparagine).

It belongs to the male-specific scotti family.

Its function is as follows. Post-meiotically transcribed gene that has a role in late spermiogenesis; required for actin cone progression during spermatid individualization. The polypeptide is Male-specific protein scotti (Drosophila sechellia (Fruit fly)).